We begin with the raw amino-acid sequence, 1719 residues long: Sodium channel protein type 4 subunit alpha B (1719 aa).

Topologically, residues 1–126 (MRTLLPPVGS…IVAIKILIHS (126 aa)) are cytoplasmic. The disordered stretch occupies residues 28-50 (QQIREEERKRTNAQVSEELPEPA). One copy of the I repeat lies at 108–431 (LLSPFNALRI…VVAMAYAEQN (324 aa)). Residues 127–145 (LFSLFIMATILTNCAFMTL) traverse the membrane as a helical segment. Over 146–152 (SDPPAWS) the chain is Extracellular. Residues 153–173 (KTMEYVFTFIYTFEATIKILS) form a helical membrane-spanning segment. Over 174–187 (RGFCVGKFTFLKDP) the chain is Cytoplasmic. Residues 188–205 (WNWLDFMVISMAYLTELV) traverse the membrane as a helical segment. Over 206-211 (DLGNVS) the chain is Extracellular. The N-linked (GlcNAc...) asparagine glycan is linked to asparagine 209. A helical transmembrane segment spans residues 212-228 (VLRTFRVLRALKTITVI). At 229–247 (PGLKTIVGALIQSVRKLAD) the chain is on the cytoplasmic side. A helical transmembrane segment spans residues 248–267 (AMVLTVFCLSVFALIGLQLF). The Extracellular segment spans residues 268-368 (MGNLRQKCVL…PNYGYTSYDS (101 aa)). The cysteines at positions 275 and 337 are disulfide-linked. N-linked (GlcNAc...) asparagine glycosylation is found at asparagine 285 and asparagine 339. Cysteines 346 and 352 form a disulfide. An intramembrane region (pore-forming) is located at residues 369-393 (FGWAFLALFRLMTQDFWENLFQLTL). Residues 394-400 (RTAGKTY) are Extracellular-facing. The helical transmembrane segment at 401–421 (MIFFVVVIFLGSFYLINLILA) threads the bilayer. Residues 422–513 (VVAMAYAEQN…ECLYAIVMDP (92 aa)) are Cytoplasmic-facing. One copy of the II repeat lies at 495–766 (CCGCWRHLKE…QIAINRINRA (272 aa)). Residues 514–532 (FVDLGITICIILNTVFMAM) form a helical membrane-spanning segment. Topologically, residues 533–543 (EHYPMSADFEE) are extracellular. Residues 544-563 (LLSVGNLVFTGIFTGEMVFK) traverse the membrane as a helical segment. At 564–577 (ILAMDPYFYFQVGW) the chain is on the cytoplasmic side. The chain crosses the membrane as a helical span at residues 578 to 597 (NIFDSIIVTISLVELGLANV). Residues 598-599 (QG) lie on the Extracellular side of the membrane. A helical transmembrane segment spans residues 600 to 617 (LSVLRSFRLMRVFKLAKS). Residues 618–633 (WPTLNMLIKIIGNSVG) are Cytoplasmic-facing. The chain crosses the membrane as a helical span at residues 634–652 (ALGNLTLVLAIIVFIFAVV). The Extracellular segment spans residues 653-681 (GMQLFGKNYKDCVCRISEDCVLPRWHMND). A disulfide bond links cysteine 666 and cysteine 672. The pore-forming intramembrane region spans 682–702 (FFHAFLIIFRVLCGEWIESMW). The Extracellular segment spans residues 703-713 (DCMEVSGQTMC). A disulfide bridge connects residues cysteine 704 and cysteine 713. The chain crosses the membrane as a helical span at residues 714–732 (LIVFMMVLVIGNLVVLNLF). Over 733–919 (LALLLSSFSG…TCFSIVENNY (187 aa)) the chain is Cytoplasmic. Over residues 834 to 845 (SDSDDSDYDEDK) the composition is skewed to acidic residues. The interval 834–862 (SDSDDSDYDEDKDSQCDESSVCSSVQKPE) is disordered. Residues 900–1215 (RGKIWCNIRR…KKYYNAMKKL (316 aa)) form an III repeat. The helical transmembrane segment at 920–937 (FESFIVFMILLSSGALAF) threads the bilayer. Residues 938-950 (EDIYLEKHQLIKS) lie on the Extracellular side of the membrane. Residues 951 to 969 (ILEYADKVFTYVFVMEMVL) traverse the membrane as a helical segment. The Cytoplasmic segment spans residues 970 to 983 (KWFAYGFKSYFSNA). A helical membrane pass occupies residues 984–1002 (WCWLDFLIVDVSLVSLTAN). Residues 1003–1010 (ILGYSELG) are Extracellular-facing. Residues 1011 to 1029 (AIKSLRTLRALRPLRALSR) traverse the membrane as a helical segment. The Cytoplasmic portion of the chain corresponds to 1030–1046 (FEGMRVVVNALVGAVPS). A helical membrane pass occupies residues 1047–1066 (IFNVLLVCLIFWLIFSIMGV). Residues 1067–1119 (NLFAGKFSYCFNETSQEIIDTKVVDNKTECIALIKANFTEVRWKNVKVNYDNV) are Extracellular-facing. Cysteine 1076 and cysteine 1096 form a disulfide bridge. Residues asparagine 1078 and asparagine 1092 are each glycosylated (N-linked (GlcNAc...) asparagine). Positions 1120–1141 (GIGYLSLLQVATFKGWTDIMYA) form an intramembrane region, pore-forming. Over 1142–1158 (AVDSRDVESQPIYEVNL) the chain is Extracellular. A helical membrane pass occupies residues 1159–1180 (YMYLYFVIFIIFGSFFTLNLFI). At 1181–1243 (GVIIDNFNQQ…LVFDLVTKQI (63 aa)) the chain is on the cytoplasmic side. The important for rapid channel inactivation stretch occupies residues 1199-1201 (IFM). An IV repeat occupies 1224–1521 (VPRPENPFQG…WEKFDPDASQ (298 aa)). Residues 1244–1261 (FDVFIMVLICLNMVTMMV) traverse the membrane as a helical segment. At 1262–1272 (ETDEQSDKKEE) the chain is on the extracellular side. The helical transmembrane segment at 1273–1291 (VLYWINVVFILIFTTECTL) threads the bilayer. Topologically, residues 1292–1303 (KIIALRRHYFSI) are cytoplasmic. The helical transmembrane segment at 1304–1321 (GWNIFDFVVVILSILGLL) threads the bilayer. The Extracellular segment spans residues 1322–1334 (LADIIEKYFVSPT). A helical membrane pass occupies residues 1335–1351 (LFRVIRLARIGRVLRLI). The Cytoplasmic segment spans residues 1352-1370 (RGAKGIRTLLFALMMSLPA). A helical membrane pass occupies residues 1371 to 1388 (LFNIGLLLFLIMFIFSIF). The Extracellular portion of the chain corresponds to 1389–1410 (GMSNFAYVKKEALIDDMFNFET). Residues 1411–1433 (FGNSMICLFMITTSAGWDGLLSP) constitute an intramembrane region (pore-forming). Topologically, residues 1434-1462 (IMNTPPDCDPNVENPGTTVRGNCGSPAIG) are extracellular. The cysteines at positions 1441 and 1456 are disulfide-linked. Residues 1463 to 1485 (IAFFSTYIIMSFLVVVNMFIAII) form a helical membrane-spanning segment. The Cytoplasmic segment spans residues 1486–1719 (LENFNVATEE…QERDQRETSV (234 aa)). The region spanning 1615–1644 (EEVAATVIQRAYRKYLLLRTVRLASFMYRE) is the IQ domain.

It belongs to the sodium channel (TC 1.A.1.10) family. Nav1.4/SCN4A subfamily. In terms of assembly, voltage-gated sodium (Nav) channels consist of an ion-conducting alpha subunit which is functional on its own associated with regulatory beta subunits.

Its subcellular location is the cell membrane. The enzyme catalyses Na(+)(in) = Na(+)(out). Pore-forming subunit of a voltage-gated sodium (Nav) channel that directly mediates the depolarizing phase of action potentials in excitable membranes. Navs, also called VGSCs (voltage-gated sodium channels) or VDSCs (voltage-dependent sodium channels), operate by switching between closed and open conformations depending on the voltage difference across the membrane. In the open conformation they allow Na(+) ions to selectively pass through the pore, along their electrochemical gradient. The influx of Na+ ions provokes membrane depolarization, initiating the propagation of electrical signals throughout cells and tissues. In Takifugu rubripes (Japanese pufferfish), this protein is Sodium channel protein type 4 subunit alpha B (scn4ab).